The chain runs to 491 residues: uncharacterized protein (491 aa).

12 consecutive transmembrane segments (helical) span residues 48–68 (LILVSAFALLGPMASSMVAPC), 85–105 (ALILSIYLLVFAISPMISAPL), 112–132 (RMLLQVGNVIFIVFNMACGLA), 140–160 (IFRFLAGFGSATPMGLGSGTI), 174–194 (AVMSLAPLLGPTIGPVVSGFI), 202–222 (WIFWSTTIFSGFIFALSLPLL), 277–297 (PIVILCSTYMAIQYGILYLVL), 317–337 (LNYIASGIGLIFGSQASGIFI), 358–378 (VPVILLGTFFFPAGLFIYGWT), 383–403 (THWIGPDIGAAMFNIGLMLGW), 408–428 (TYLIDSFMIYAASSTAVACCV), and 455–475 (LLAFIVLGSSIITCSLLWFGG).

Belongs to the major facilitator superfamily.

It localises to the membrane. This is an uncharacterized protein from Schizosaccharomyces pombe (strain 972 / ATCC 24843) (Fission yeast).